The primary structure comprises 375 residues: Alpha-2,8-sialyltransferase 8B (375 aa).

At 1–6 (MQLQFR) the chain is on the cytoplasmic side. Residues 7–23 (SWMLAALTLLVVFLIFA) traverse the membrane as a helical; Signal-anchor for type II membrane protein segment. Over 24–375 (DISEIEEEIG…LTVGQCDGAT (352 aa)) the chain is Lumenal. N-linked (GlcNAc...) asparagine glycans are attached at residues N60, N72, N89, and N134. Disulfide bonds link C157–C307 and C171–C371. Residues N162 and N185 each contribute to the CMP-N-acetyl-beta-neuraminate site. N-linked (GlcNAc...) asparagine glycans are attached at residues N219 and N234. The CMP-N-acetyl-beta-neuraminate site is built by T294, T295, G296, W316, Y329, and H330. Catalysis depends on H346, which acts as the Proton donor/acceptor.

This sequence belongs to the glycosyltransferase 29 family. Post-translationally, autopolysialylated. Autopolysialylation is not a prerequisite for the polysialylation acitity, but enhances the polysialylation acitity. As to expression, highly expressed in fetal brain, kidney and heart and to a much lesser extent in adult heart and thymus.

Its subcellular location is the golgi apparatus membrane. The protein resides in the secreted. It is found in the cell membrane. It catalyses the reaction [N-acetyl-alpha-D-neuraminosyl-(2-&gt;8)](n) + CMP-N-acetyl-beta-neuraminate = [N-acetyl-alpha-D-neuraminosyl-(2-&gt;8)](n+1) + CMP + H(+). The protein operates within protein modification; protein glycosylation. In terms of biological role, catalyzes the transfer of a sialic acid from a CMP-linked sialic acid donor onto a terminal alpha-2,3-, alpha-2,6-, or alpha-2,8-linked sialic acid of an N-linked glycan acceptor through alpha-2,8-linkages. Therefore, participates in polysialic acid synthesis on various sialylated N-acetyllactosaminyl oligosaccharides (alpha-2,3-, alpha-2,6-, or alpha-2,8-linked sialic acid), including NCAM1, NCAM1 N-glycans, FETUB N-glycans, and to a lesser extent sialylparagloboside (SPG) and AHSG, which does not require the initial addition of an alpha 2,8-sialic acid. However, does not exhibit sialic acid-polymerase activity. Catalyzes polysialic acid synthesis in the hippocampal on NCAM1 and supports neurite outgrowth. ST8SIA2-mediated polysialylation influences on oligodendrocyte differentiation and may promote the integrity of myelin and axons. The chain is Alpha-2,8-sialyltransferase 8B from Homo sapiens (Human).